Here is a 237-residue protein sequence, read N- to C-terminus: 2-C-methyl-D-erythritol 4-phosphate cytidylyltransferase (237 aa).

Belongs to the IspD/TarI cytidylyltransferase family. IspD subfamily.

It catalyses the reaction 2-C-methyl-D-erythritol 4-phosphate + CTP + H(+) = 4-CDP-2-C-methyl-D-erythritol + diphosphate. The protein operates within isoprenoid biosynthesis; isopentenyl diphosphate biosynthesis via DXP pathway; isopentenyl diphosphate from 1-deoxy-D-xylulose 5-phosphate: step 2/6. Its function is as follows. Catalyzes the formation of 4-diphosphocytidyl-2-C-methyl-D-erythritol from CTP and 2-C-methyl-D-erythritol 4-phosphate (MEP). The sequence is that of 2-C-methyl-D-erythritol 4-phosphate cytidylyltransferase from Acaryochloris marina (strain MBIC 11017).